The chain runs to 179 residues: Large ribosomal subunit protein uL5 (179 aa).

It belongs to the universal ribosomal protein uL5 family. In terms of assembly, part of the 50S ribosomal subunit; part of the 5S rRNA/L5/L18/L25 subcomplex. Contacts the 5S rRNA and the P site tRNA. Forms a bridge to the 30S subunit in the 70S ribosome.

This is one of the proteins that bind and probably mediate the attachment of the 5S RNA into the large ribosomal subunit, where it forms part of the central protuberance. In the 70S ribosome it contacts protein S13 of the 30S subunit (bridge B1b), connecting the 2 subunits; this bridge is implicated in subunit movement. Contacts the P site tRNA; the 5S rRNA and some of its associated proteins might help stabilize positioning of ribosome-bound tRNAs. The chain is Large ribosomal subunit protein uL5 from Bacillus pumilus (strain SAFR-032).